Here is a 76-residue protein sequence, read N- to C-terminus: Conotoxin Am6.3 (76 aa).

An N-terminal signal peptide occupies residues 1 to 22 (MKLTCMMIIAVLFLTAWTFATA). Disulfide bonds link Cys52–Cys67, Cys59–Cys71, and Cys66–Cys75.

The protein belongs to the conotoxin O1 superfamily. Is not hydroxylated. Expressed by the venom duct.

Its subcellular location is the secreted. In terms of biological role, probable toxin that inhibits ion channels. The protein is Conotoxin Am6.3 of Conus amadis (Amadis cone).